Reading from the N-terminus, the 166-residue chain is Antibacterial peptide PMAP-36 (166 aa).

The first 29 residues, 1–29, serve as a signal peptide directing secretion; it reads METQRASLCLGRWSLWLLLLGLVVPSASA. Residues 30 to 129 constitute a propeptide that is removed on maturation; sequence QALSYREAVL…LDINCDEIQS (100 aa). 2 disulfides stabilise this stretch: cysteine 85-cysteine 96 and cysteine 107-cysteine 124.

This sequence belongs to the cathelicidin family.

It localises to the secreted. Its function is as follows. Exerts antimicrobial activity against both Gram-positive and negative bacteria. Its activity appears to be mediated by its ability to damage bacterial membranes. This is Antibacterial peptide PMAP-36 (PMAP36) from Sus scrofa (Pig).